The following is a 63-amino-acid chain: Large ribosomal subunit protein uL29 (63 aa).

Belongs to the universal ribosomal protein uL29 family.

This is Large ribosomal subunit protein uL29 from Serratia proteamaculans (strain 568).